The following is a 622-amino-acid chain: Condensin-2 complex subunit H2 (622 aa).

A Phosphothreonine modification is found at T19. Phosphoserine occurs at positions 95, 199, 223, and 227. A disordered region spans residues W207–A354. A compositionally biased stretch (low complexity) spans A262–V273. S282 is modified (phosphoserine). Over residues T294 to P312 the composition is skewed to basic and acidic residues.

Belongs to the CND2 H2 (condensin-2 subunit 2) family. As to quaternary structure, component of the condensin-2 complex, which contains the SMC2 and SMC4 heterodimer, and three non SMC subunits, NCAPG2, NCAPH2 and NCAPD3 that probably regulate the complex.

The protein localises to the nucleus. Functionally, regulatory subunit of the condensin-2 complex, a complex that seems to provide chromosomes with an additional level of organization and rigidity and in establishing mitotic chromosome architecture. May promote the resolution of double-strand DNA catenanes (intertwines) between sister chromatids. Condensin-mediated compaction likely increases tension in catenated sister chromatids, providing directionality for type II topoisomerase-mediated strand exchanges toward chromatid decatenation. Required for decatenation of chromatin bridges at anaphase. Early in neurogenesis, may play an essential role to ensure accurate mitotic chromosome condensation in neuron stem cells, ultimately affecting neuron pool and cortex size. Seems to have lineage-specific role in T-cell development. The polypeptide is Condensin-2 complex subunit H2 (NCAPH2) (Bos taurus (Bovine)).